A 479-amino-acid polypeptide reads, in one-letter code: MSHFKNYQISHDILRALEGLGYTEPTKVQQSVIPAALERKDLVVKSQTGSGKTASFGIPLCELANWDENKPQALILTPTRELAVQVKEDITNIGRFKRIKATAVFGKSSFDKQKAELKQKSHIVVGTPGRVLDHIEKGTLPLDRLSYLVIDEADEMLNMGFIEQVEAIIKHLPTERTTMLFSATLPQDIEKLSRQYMQNPEHIEVKAAGLTTRNIEHAVIQVREENKFSLLKDVLMTENPDSCIIFCRTKEHVNQLTDELDDLGYPCDKIHGGMIQEDRFDVMNEFKRGEYRYLVATDVAARGIDIENISLVINYDLPLEKESYVHRTGRTGRAGNKGKAISFVTAFEKRFLADIEEYIGFEIQKIEAPSQEEVARKKPEFLAKLNDRPESKKDKSEELNKDIMKLYFNGGKKKKIRAVDFVGTIAKIDGVSADDIGIITIMDNASYVEILNGKGPHVLKVMKNTTVKGKQLKVNKANK.

Residues 2 to 30 carry the Q motif motif; that stretch reads SHFKNYQISHDILRALEGLGYTEPTKVQQ. In terms of domain architecture, Helicase ATP-binding spans 33–203; sequence IPAALERKDL…RQYMQNPEHI (171 aa). 46–53 contacts ATP; it reads SQTGSGKT. Residues 151-154 carry the DEAD box motif; that stretch reads DEAD. The Helicase C-terminal domain occupies 214-374; that stretch reads NIEHAVIQVR…KIEAPSQEEV (161 aa). The segment at 404 to 479 is involved in 23S rRNA binding; sequence MKLYFNGGKK…KQLKVNKANK (76 aa).

The protein belongs to the DEAD box helicase family. DbpA subfamily. In terms of assembly, may interact with RNA helicases CshA and CshB.

The protein localises to the cytoplasm. It catalyses the reaction ATP + H2O = ADP + phosphate + H(+). Its activity is regulated as follows. ATPase activity is stimulated by interaction with RNA. DEAD-box RNA helicase involved in the assembly of the 50S ribosomal subunit. Has an RNA-dependent ATPase activity, which is specific for 23S rRNA, and a 3' to 5' RNA helicase activity that uses the energy of ATP hydrolysis to destabilize and unwind short rRNA duplexes. The sequence is that of ATP-dependent RNA helicase DbpA from Bacillus subtilis (strain 168).